The sequence spans 420 residues: Disease resistance protein CHS1 (420 aa).

The TIR domain occupies 12-167; it reads RELDVFLSFS…QIADDIRLMF (156 aa). Residue glutamate 86 is part of the active site. An NB-ARC domain is found at 185-406; sequence MKALYALLAL…KDIKEVWKIM (222 aa).

As to expression, mostly expressed in leaves and flowers (mainly in sepals), and, at a lower intensity, in stems. Present at low levels in roots and seeds.

It localises to the cytoplasm. Its subcellular location is the nucleus. It carries out the reaction NAD(+) + H2O = ADP-D-ribose + nicotinamide + H(+). Functionally, confers resistance to low temperatures by limiting chloroplast damage and cell death, thus maintaining growth homeostasis. Regulates steryl-esters and sterols accumulation. Limits leaf necrosis associated with virulent bacterial infection (e.g. Pseudomonas syringae pv. tomato DC3000). The polypeptide is Disease resistance protein CHS1 (Arabidopsis thaliana (Mouse-ear cress)).